We begin with the raw amino-acid sequence, 448 residues long: Tubulin alpha chain (448 aa).

GTP contacts are provided by Q12, E73, S142, G146, T147, T181, N208, and N230. E73 provides a ligand contact to Mg(2+). E256 is an active-site residue.

This sequence belongs to the tubulin family. In terms of assembly, dimer of alpha and beta chains. A typical microtubule is a hollow water-filled tube with an outer diameter of 25 nm and an inner diameter of 15 nM. Alpha-beta heterodimers associate head-to-tail to form protofilaments running lengthwise along the microtubule wall with the beta-tubulin subunit facing the microtubule plus end conferring a structural polarity. Microtubules usually have 13 protofilaments but different protofilament numbers can be found in some organisms and specialized cells. It depends on Mg(2+) as a cofactor.

Its subcellular location is the cytoplasm. It is found in the cytoskeleton. The enzyme catalyses GTP + H2O = GDP + phosphate + H(+). In terms of biological role, tubulin is the major constituent of microtubules, a cylinder consisting of laterally associated linear protofilaments composed of alpha- and beta-tubulin heterodimers. Microtubules grow by the addition of GTP-tubulin dimers to the microtubule end, where a stabilizing cap forms. Below the cap, tubulin dimers are in GDP-bound state, owing to GTPase activity of alpha-tubulin. The protein is Tubulin alpha chain (TUB1) of Eremothecium gossypii (strain ATCC 10895 / CBS 109.51 / FGSC 9923 / NRRL Y-1056) (Yeast).